We begin with the raw amino-acid sequence, 476 residues long: NADH-quinone oxidoreductase subunit N (476 aa).

A run of 14 helical transmembrane segments spans residues 10 to 30 (AVLP…IGAI), 42 to 62 (LAIA…AVTI), 77 to 97 (FMKV…VDWL), 108 to 128 (AVLV…GDLI), 129 to 149 (ALYL…AINR), 162 to 182 (FVLG…IYGF), 202 to 222 (LVFG…AVPF), 234 to 254 (PTPV…AVFV), 268 to 288 (WQQI…FAAI), 296 to 316 (LLAY…AAGT), 323 to 343 (VLLY…CVLA), 368 to 388 (ALAL…AGFV), 392 to 412 (YVFL…GVVA), and 445 to 465 (AVLA…TPLI).

This sequence belongs to the complex I subunit 2 family. NDH-1 is composed of 14 different subunits. Subunits NuoA, H, J, K, L, M, N constitute the membrane sector of the complex.

Its subcellular location is the cell inner membrane. It carries out the reaction a quinone + NADH + 5 H(+)(in) = a quinol + NAD(+) + 4 H(+)(out). Functionally, NDH-1 shuttles electrons from NADH, via FMN and iron-sulfur (Fe-S) centers, to quinones in the respiratory chain. The immediate electron acceptor for the enzyme in this species is believed to be ubiquinone. Couples the redox reaction to proton translocation (for every two electrons transferred, four hydrogen ions are translocated across the cytoplasmic membrane), and thus conserves the redox energy in a proton gradient. This is NADH-quinone oxidoreductase subunit N from Azorhizobium caulinodans (strain ATCC 43989 / DSM 5975 / JCM 20966 / LMG 6465 / NBRC 14845 / NCIMB 13405 / ORS 571).